We begin with the raw amino-acid sequence, 442 residues long: tRNA modification GTPase MnmE (442 aa).

Arg-22, Glu-79, and Lys-119 together coordinate (6S)-5-formyl-5,6,7,8-tetrahydrofolate. Positions 216–366 (GIKTCLVGAP…LLEKIKSIFA (151 aa)) constitute a TrmE-type G domain. K(+) is bound at residue Asn-226. GTP is bound by residues 226–231 (NSGKSS), 245–251 (SEIPGTT), and 270–273 (DTAG). Ser-230 contributes to the Mg(2+) binding site. K(+)-binding residues include Ser-245, Ile-247, and Thr-250. Position 251 (Thr-251) interacts with Mg(2+). A (6S)-5-formyl-5,6,7,8-tetrahydrofolate-binding site is contributed by Lys-442.

It belongs to the TRAFAC class TrmE-Era-EngA-EngB-Septin-like GTPase superfamily. TrmE GTPase family. In terms of assembly, homodimer. Heterotetramer of two MnmE and two MnmG subunits. K(+) serves as cofactor.

The protein resides in the cytoplasm. Functionally, exhibits a very high intrinsic GTPase hydrolysis rate. Involved in the addition of a carboxymethylaminomethyl (cmnm) group at the wobble position (U34) of certain tRNAs, forming tRNA-cmnm(5)s(2)U34. The chain is tRNA modification GTPase MnmE from Mesomycoplasma hyopneumoniae (strain 232) (Mycoplasma hyopneumoniae).